Here is a 545-residue protein sequence, read N- to C-terminus: Ribosomal protein uS12 methylthiotransferase RimO (545 aa).

The region spanning arginine 7 to glycine 129 is the MTTase N-terminal domain. [4Fe-4S] cluster-binding residues include cysteine 16, cysteine 52, cysteine 92, cysteine 197, cysteine 201, and cysteine 204. The region spanning leucine 183–arginine 414 is the Radical SAM core domain. Residues glutamine 416–alanine 510 enclose the TRAM domain. Disordered stretches follow at residues leucine 454–valine 486 and arginine 516–threonine 545. Residues proline 455–proline 464 show a composition bias toward low complexity.

Belongs to the methylthiotransferase family. RimO subfamily. It depends on [4Fe-4S] cluster as a cofactor.

It is found in the cytoplasm. It carries out the reaction L-aspartate(89)-[ribosomal protein uS12]-hydrogen + (sulfur carrier)-SH + AH2 + 2 S-adenosyl-L-methionine = 3-methylsulfanyl-L-aspartate(89)-[ribosomal protein uS12]-hydrogen + (sulfur carrier)-H + 5'-deoxyadenosine + L-methionine + A + S-adenosyl-L-homocysteine + 2 H(+). Functionally, catalyzes the methylthiolation of an aspartic acid residue of ribosomal protein uS12. The sequence is that of Ribosomal protein uS12 methylthiotransferase RimO from Frankia alni (strain DSM 45986 / CECT 9034 / ACN14a).